The sequence spans 385 residues: Acetate kinase (385 aa).

Residue Asn9 participates in Mg(2+) binding. Lys16 is an ATP binding site. Arg87 contributes to the substrate binding site. Asp144 acts as the Proton donor/acceptor in catalysis. ATP is bound by residues 202–206 and 277–279; these read HLGSG and DMR. Glu373 is a Mg(2+) binding site.

The protein belongs to the acetokinase family. As to quaternary structure, homodimer. The cofactor is Mg(2+). Requires Mn(2+) as cofactor.

Its subcellular location is the cytoplasm. The catalysed reaction is acetate + ATP = acetyl phosphate + ADP. The protein operates within metabolic intermediate biosynthesis; acetyl-CoA biosynthesis; acetyl-CoA from acetate: step 1/2. Catalyzes the formation of acetyl phosphate from acetate and ATP. Can also catalyze the reverse reaction. This Rickettsia typhi (strain ATCC VR-144 / Wilmington) protein is Acetate kinase.